The chain runs to 721 residues: MPDLLIELRSEEIPARMQRKAAGDLKKLVTDALVEAGLTYEGAREYWTPRRLTLDIRGLNARSADVREERKGPRTDANEKAIEGFLRAAGLSSIGDAHVHSDPKKGDFYVAHIVKPGRDAEDIVAEVMPAIIRDFPWPKSMRSGAASAKPGSLRWVRPLQSIVCTFGAETEETRVIPFAVDGITASNITYGHRFHAPEAIMVRRFADYADKLEKAKVVLDAERRKEIIGADARNIAFANGLELVEDEGLLEEVTGLVEWPRVLMGSFEESYLEIPSEIIRLTIKTNQKCFVTRQPGAETLSNRFILVSNIEAKDGGKEIVHGNGKVVRARLSDAAHFWKRDQGDLPDLETLKPSAEKFGLDLGKPLDQRMAKLDALNVTFHAKLGTQGERVARIRSIALALAEVTGADQALVERSVVLAKADLRTEAVGEFPELQGIMGHKYAVLQGEDAAVANAIEDHYKPQGPSDRVPTDAVSAAVALADKLDTLAGFWAIDEKPTGSKDPYALRRAALGVIRLILEGRTRLPLLPFFDVALKALRTQRPDLTGDIAADLLAFFHDRLKVYLRDLGARYDLIDAVLTSEADDLLMIARRVEALTAFITAEEGKNLLAGTKRATQILAAEEKKGTEVADQVDERLFRLDAERTLHASIKLASDDAREAIGKEDFRSAMAALSKLREPVDVFFNDVLVNDEDRAIRANRLALLGLIRSATGEVADFSKISG.

This sequence belongs to the class-II aminoacyl-tRNA synthetase family. Tetramer of two alpha and two beta subunits.

Its subcellular location is the cytoplasm. The enzyme catalyses tRNA(Gly) + glycine + ATP = glycyl-tRNA(Gly) + AMP + diphosphate. This Sinorhizobium fredii (strain NBRC 101917 / NGR234) protein is Glycine--tRNA ligase beta subunit.